A 280-amino-acid polypeptide reads, in one-letter code: Large ribosomal subunit protein uL2cz/uL2cy (280 aa).

Disordered stretches follow at residues 1–25 (MAIHLYKTSTPSTRNGAVDSQVKSN) and 231–280 (PVDH…RRTK).

This sequence belongs to the universal ribosomal protein uL2 family. Part of the 50S ribosomal subunit.

Its subcellular location is the plastid. The protein localises to the chloroplast. The sequence is that of Large ribosomal subunit protein uL2cz/uL2cy (rpl2-A) from Platanus occidentalis (Sycamore).